A 247-amino-acid chain; its full sequence is Adenosylcobinamide-GDP ribazoletransferase (247 aa).

5 helical membrane passes run 34–54 (IITFPLIGLLLGAISGLVFMV), 57–77 (AWCGAPLAALFSVLVLALMTG), 113–133 (GGLALIFVVLAKILVLSELAL), 138–158 (ILASLAAACAVSRGTAALLMY), and 194–214 (VLLLGMHGVAAMVVTMVAIFI).

It belongs to the CobS family. It depends on Mg(2+) as a cofactor.

The protein localises to the cell inner membrane. The catalysed reaction is alpha-ribazole + adenosylcob(III)inamide-GDP = adenosylcob(III)alamin + GMP + H(+). It catalyses the reaction alpha-ribazole 5'-phosphate + adenosylcob(III)inamide-GDP = adenosylcob(III)alamin 5'-phosphate + GMP + H(+). Its pathway is cofactor biosynthesis; adenosylcobalamin biosynthesis; adenosylcobalamin from cob(II)yrinate a,c-diamide: step 7/7. Its function is as follows. Joins adenosylcobinamide-GDP and alpha-ribazole to generate adenosylcobalamin (Ado-cobalamin). Also synthesizes adenosylcobalamin 5'-phosphate from adenosylcobinamide-GDP and alpha-ribazole 5'-phosphate. This chain is Adenosylcobinamide-GDP ribazoletransferase, found in Shigella flexneri serotype 5b (strain 8401).